Here is a 120-residue protein sequence, read N- to C-terminus: Host cell factor C1 regulator 1 (120 aa).

The segment at 1–30 (MILQQPLERGPPSRDPRATTGVTRGLNASL) is disordered. Polar residues predominate over residues 20 to 30 (TGVTRGLNASL). Residues 58 to 61 (DHPY) form an interaction with HCFC1 region. A Nuclear export signal motif is present at residues 92-101 (IPEALRLLRL).

As to quaternary structure, interacts with HCFC1.

It localises to the cytoplasm. It is found in the nucleus. In terms of biological role, regulates HCFC1 activity by modulating its subcellular localization. Overexpression of HCFC1R1 leads to accumulation of HCFC1 in the cytoplasm. HCFC1R1-mediated export may provide the pool of cytoplasmic HCFC1 required for import of virion-derived VP16 into the nucleus. In Mus musculus (Mouse), this protein is Host cell factor C1 regulator 1 (Hcfc1r1).